We begin with the raw amino-acid sequence, 363 residues long: MAP kinase kinase skh1/pek1 (363 aa).

The region spanning 79–343 (ILYMNSLGEG…PQKMLTHPWV (265 aa)) is the Protein kinase domain. ATP-binding positions include 85–93 (LGEGVSGSV) and K108. The active-site Proton acceptor is D206. The residue at position 234 (S234) is a Phosphoserine. T238 is modified (phosphothreonine).

The protein belongs to the protein kinase superfamily. STE Ser/Thr protein kinase family. MAP kinase kinase subfamily.

The catalysed reaction is L-seryl-[protein] + ATP = O-phospho-L-seryl-[protein] + ADP + H(+). It carries out the reaction L-threonyl-[protein] + ATP = O-phospho-L-threonyl-[protein] + ADP + H(+). The enzyme catalyses L-tyrosyl-[protein] + ATP = O-phospho-L-tyrosyl-[protein] + ADP + H(+). With respect to regulation, activated by mkh1. Functionally, involved in the mkh1 signal transduction pathway that plays a role in cell wall integrity. Activates spm1/pmk1 via phosphorylation. The polypeptide is MAP kinase kinase skh1/pek1 (skh1) (Schizosaccharomyces pombe (strain 972 / ATCC 24843) (Fission yeast)).